The sequence spans 633 residues: Pesticidal crystal protein Cry2Aa (633 aa).

The protein belongs to the delta endotoxin family.

In terms of biological role, promotes colloidosmotic lysis by binding to the midgut epithelial cells of both dipteran (Aedes aegypti) and lepidopteran (Manduca sexta) larvae. The chain is Pesticidal crystal protein Cry2Aa (cry2Aa) from Bacillus thuringiensis subsp. kenyae.